We begin with the raw amino-acid sequence, 410 residues long: Peptidase T-like protein YPO1009/y3403/YP_3421 (410 aa).

His-82 lines the Zn(2+) pocket. Asp-84 is an active-site residue. Asp-144 serves as a coordination point for Zn(2+). Glu-176 serves as the catalytic Proton acceptor. 3 residues coordinate Zn(2+): Glu-177, Asp-200, and His-382.

Belongs to the peptidase M20B family. Zn(2+) is required as a cofactor.

This chain is Peptidase T-like protein YPO1009/y3403/YP_3421, found in Yersinia pestis.